The following is a 434-amino-acid chain: Nuclear envelope integral membrane protein 1b (434 aa).

Residues 1-29 (MAGEVEGRGCGFSLGVLVTLLVLPLPSLC) form the signal peptide. Transmembrane regions (helical) follow at residues 151-171 (PRLF…DTLS), 175-195 (LFFY…ILVF), 206-226 (PFFA…QLVF), 239-259 (YLIV…YIYG), and 280-300 (LLMY…VIAF). Positions 176–287 (FFYSTGITVG…GLLLMYVSVQ (112 aa)) are a; required for its colocalization with lamins at the nuclear envelope. Positions 317 to 325 (RKIKLKRAK) match the Nuclear localization signal motif. The b; interaction with ran stretch occupies residues 326 to 395 (PGPPRLLTEE…LTPNEVSVHE (70 aa)). The interval 326–434 (PGPPRLLTEE…PLYPIPRSVF (109 aa)) is interaction with banf1-a and banf1-b. The interval 368 to 375 (SRIQSPKR) is BAF-binding site (BBS); essential for interaction with banf1-a, banf1-b and ran.

The protein belongs to the NEMP family. Interacts with banf1-a and banf1-b. Interacts with ran-gtp. Post-translationally, phosphorylated.

The protein resides in the nucleus inner membrane. It is found in the nucleus envelope. Functionally, in concert with ran, required for proper eye development. May be involved in the expression of early eye marker genes. Contributes to nuclear envelope stiffness in germ cells. Required for fertility. Essential for normal erythropoiesis. Required for efficient nuclear envelope opening and enucleation during the late stages of erythroblast maturation. The protein is Nuclear envelope integral membrane protein 1b (nemp1b) of Xenopus laevis (African clawed frog).